Here is a 112-residue protein sequence, read N- to C-terminus: Prostatic steroid-binding protein C2 (112 aa).

The signal sequence occupies residues 1 to 20; that stretch reads MRLSLCLLTILVVCCYEANG. Q21 is subject to Pyrrolidone carboxylic acid.

It belongs to the secretoglobin family. Lipophilin subfamily. As to quaternary structure, prostatein is composed of three different peptides called C1, C2 and C3. These form covalent C1:C3 (F) and C2:C3 (S) heterodimers whose noncovalent association forms tetrameric (C1:C3/C3:C2) prostatein molecules. Linked by three disulfide bonds to C3. Post-translationally, the N-terminus is blocked.

It is found in the secreted. Part of prostatein which is the major secretory glycoprotein of ventral prostate gland. The sequence is that of Prostatic steroid-binding protein C2 (Psbpc2) from Rattus norvegicus (Rat).